Consider the following 541-residue polypeptide: Anthranilate synthase component 1 (541 aa).

Residues Ser-61 and 311-313 (PYM) each bind L-tryptophan. Chorismate is bound at residue 348 to 349 (GT). Residue Glu-381 participates in Mg(2+) binding. Residues Tyr-469, Arg-489, 503–505 (GAG), and Gly-505 contribute to the chorismate site. Residue Glu-518 participates in Mg(2+) binding.

The protein belongs to the anthranilate synthase component I family. In terms of assembly, heterotetramer consisting of two non-identical subunits: a beta subunit (TrpG) and a large alpha subunit (TrpE). Requires Mg(2+) as cofactor.

The catalysed reaction is chorismate + L-glutamine = anthranilate + pyruvate + L-glutamate + H(+). It functions in the pathway amino-acid biosynthesis; L-tryptophan biosynthesis; L-tryptophan from chorismate: step 1/5. Feedback inhibited by tryptophan. Functionally, part of a heterotetrameric complex that catalyzes the two-step biosynthesis of anthranilate, an intermediate in the biosynthesis of L-tryptophan. In the first step, the glutamine-binding beta subunit (TrpG) of anthranilate synthase (AS) provides the glutamine amidotransferase activity which generates ammonia as a substrate that, along with chorismate, is used in the second step, catalyzed by the large alpha subunit of AS (TrpE) to produce anthranilate. In the absence of TrpG, TrpE can synthesize anthranilate directly from chorismate and high concentrations of ammonia. The sequence is that of Anthranilate synthase component 1 (trpE) from Vibrio parahaemolyticus serotype O3:K6 (strain RIMD 2210633).